Consider the following 545-residue polypeptide: Phenylalanine--tRNA ligase beta subunit (545 aa).

The region spanning 268–343 (FLHKIQNVRE…MSIGYNNLEP (76 aa)) is the B5 domain. Positions 321, 327, 330, and 331 each coordinate Mg(2+).

Belongs to the phenylalanyl-tRNA synthetase beta subunit family. Type 2 subfamily. As to quaternary structure, tetramer of two alpha and two beta subunits. It depends on Mg(2+) as a cofactor.

It localises to the cytoplasm. The enzyme catalyses tRNA(Phe) + L-phenylalanine + ATP = L-phenylalanyl-tRNA(Phe) + AMP + diphosphate + H(+). The chain is Phenylalanine--tRNA ligase beta subunit from Saccharolobus islandicus (strain L.S.2.15 / Lassen #1) (Sulfolobus islandicus).